Reading from the N-terminus, the 1432-residue chain is DNA-directed RNA polymerase subunit beta (1432 aa).

It belongs to the RNA polymerase beta chain family. As to quaternary structure, the RNAP catalytic core consists of 2 alpha, 1 beta, 1 beta' and 1 omega subunit. When a sigma factor is associated with the core the holoenzyme is formed, which can initiate transcription.

The catalysed reaction is RNA(n) + a ribonucleoside 5'-triphosphate = RNA(n+1) + diphosphate. DNA-dependent RNA polymerase catalyzes the transcription of DNA into RNA using the four ribonucleoside triphosphates as substrates. The sequence is that of DNA-directed RNA polymerase subunit beta from Solibacter usitatus (strain Ellin6076).